Here is a 436-residue protein sequence, read N- to C-terminus: GTPase Der (436 aa).

EngA-type G domains are found at residues 4 to 167 (PTIA…PNTS) and 175 to 351 (IKFS…MNQN). GTP-binding positions include 10 to 17 (GRPNVGKS), 57 to 61 (DTGGI), 119 to 122 (NKVD), 181 to 188 (GRPNVGKS), 229 to 233 (DTAGM), and 294 to 297 (NKWD). Residues 352–436 (LRIPSALLND…PIKIIPRRRK (85 aa)) enclose the KH-like domain.

It belongs to the TRAFAC class TrmE-Era-EngA-EngB-Septin-like GTPase superfamily. EngA (Der) GTPase family. As to quaternary structure, associates with the 50S ribosomal subunit.

GTPase that plays an essential role in the late steps of ribosome biogenesis. This chain is GTPase Der, found in Enterococcus faecalis (strain ATCC 700802 / V583).